The following is a 1754-amino-acid chain: Probable outer membrane protein PmpB (1754 aa).

The signal sequence occupies residues 1-14 (MSSMKWLSATAVFA). Low complexity-rich tracts occupy residues 68–105 (NIPT…TPDP) and 212–232 (SETS…PSSS). 6 disordered regions span residues 68-109 (NIPT…KGGG), 190-235 (SSNS…SRAE), 252-271 (PAAQ…GSGG), 397-438 (NADA…ATAK), 621-668 (AAEN…STPS), and 1299-1332 (TSSA…ATTP). Composition is skewed to polar residues over residues 252–264 (PAAQ…STPS) and 402–412 (ASSSPQSGSGA). Composition is skewed to low complexity over residues 413-427 (TTVS…GSDS), 636-668 (PTAD…STPS), 1299-1311 (TSSA…VSSS), and 1320-1332 (SAAA…ATTP). The Autotransporter domain occupies 1461–1754 (DDIAYNNFWV…MTSCGARMIF (294 aa)).

The protein belongs to the PMP outer membrane protein family.

It is found in the secreted. The protein resides in the cell wall. The protein localises to the cell outer membrane. This Chlamydia trachomatis serovar D (strain ATCC VR-885 / DSM 19411 / UW-3/Cx) protein is Probable outer membrane protein PmpB (pmpB).